The primary structure comprises 411 residues: ATPase GET3B (411 aa).

A chloroplast-targeting transit peptide spans 1–67 (MATLSSYLLS…RRRNSLQVKS (67 aa)). Residue 95–102 (KGGVGKTS) coordinates ATP. Asp-124 is an active-site residue. Residue Asn-348 coordinates ATP.

It belongs to the arsA ATPase family.

The protein resides in the plastid. It localises to the chloroplast stroma. The enzyme catalyses ATP + H2O = ADP + phosphate + H(+). The sequence is that of ATPase GET3B from Arabidopsis thaliana (Mouse-ear cress).